Consider the following 167-residue polypeptide: Zymogen granule membrane protein 16 (167 aa).

A signal peptide spans 1-16 (MLAVALLVLLCASASA). A Jacalin-type lectin domain is found at 24–159 (SSYSGEYGGK…IDSISLHWDT (136 aa)).

This sequence belongs to the jacalin lectin family.

The protein resides in the secreted. It is found in the extracellular space. The protein localises to the extracellular matrix. Its subcellular location is the zymogen granule lumen. It localises to the golgi apparatus lumen. May play a role in protein trafficking. May act as a linker molecule between the submembranous matrix on the luminal side of zymogen granule membrane (ZGM) and aggregated secretory proteins during granule formation in the TGN. This is Zymogen granule membrane protein 16 (Zg16) from Mus musculus (Mouse).